The chain runs to 458 residues: UPF0210 protein MJ1665 (458 aa).

Belongs to the UPF0210 family.

The polypeptide is UPF0210 protein MJ1665 (Methanocaldococcus jannaschii (strain ATCC 43067 / DSM 2661 / JAL-1 / JCM 10045 / NBRC 100440) (Methanococcus jannaschii)).